The primary structure comprises 629 residues: Replication protein A 70 kDa DNA-binding subunit D (629 aa).

Residues 112-135 (LDSKSGEEEAREPKKQKLEHSPVS) form a disordered region. Over residues 115–131 (KSGEEEAREPKKQKLEH) the composition is skewed to basic and acidic residues. Residues 194–280 (WTIKVRVTNK…QNDYEMTLNE (87 aa)) constitute a DNA-binding region (OB). The C4-type zinc finger occupies 492-512 (CKTCNKKVTEALDSGYWCEGC).

Belongs to the replication factor A protein 1 family. In terms of assembly, heterotrimer of RPA1, RPA2 and RPA3 (canonical replication protein A complex).

Its subcellular location is the nucleus. In terms of biological role, component of the replication protein A complex (RPA) required for DNA recombination, repair and replication. The activity of RPA is mediated by single-stranded DNA binding and protein interactions. Probably involved in repair of double-strand DNA breaks (DSBs) induced by genotoxic stresses. The chain is Replication protein A 70 kDa DNA-binding subunit D (RPA1D) from Arabidopsis thaliana (Mouse-ear cress).